Reading from the N-terminus, the 1086-residue chain is Endo-1,4-beta-xylanase C (1086 aa).

The N-terminal stretch at 1–31 (MRGKWLRLCLAAVLIVSLLPGLGAGEWKASA) is a signal peptide. CBM-cenC domains are found at residues 35–183 (GDIL…IRLV) and 197–359 (GQAL…ITAT). Residues 365–710 (EKNIPDLAKK…KPAYWALVDP (346 aa)) form the GH10 domain. The Proton donor role is filled by Glu-502. Residue Asp-556 is part of the active site. Catalysis depends on Glu-620, which acts as the Nucleophile.

This sequence belongs to the glycosyl hydrolase 10 (cellulase F) family.

The catalysed reaction is Endohydrolysis of (1-&gt;4)-beta-D-xylosidic linkages in xylans.. Its pathway is glycan degradation; xylan degradation. In terms of biological role, endoxylanase with high hydrolytic activity on birchwood and oat spelt xylan. Xylotetraose, xylotriose, xylobiose and xylose are the main products from birchwood xylan hydrolysis. Shows increasing activity on xylo-oligosaccharides of increasing length. Displays very low hydrolytic activity on Avicel, carboxymethylcellulose (CMC) and p-nitrophenyl-beta-xylopyranoside. Also shows transxylosidase activity, allowing the formation of xylo-oligosaccharides of higher degree of polymerization than the starting substrate. The polypeptide is Endo-1,4-beta-xylanase C (xynC) (Paenibacillus barcinonensis).